The following is a 116-amino-acid chain: Nucleoid-associated protein A9601_00191 (116 aa).

The protein belongs to the YbaB/EbfC family. As to quaternary structure, homodimer.

It localises to the cytoplasm. Its subcellular location is the nucleoid. Its function is as follows. Binds to DNA and alters its conformation. May be involved in regulation of gene expression, nucleoid organization and DNA protection. In Prochlorococcus marinus (strain AS9601), this protein is Nucleoid-associated protein A9601_00191.